Consider the following 249-residue polypeptide: Probable transcriptional regulator ycf27 (249 aa).

Residues 13–126 form the Response regulatory domain; sequence HLLIVDDENN…ELEARIQSIL (114 aa). 4-aspartylphosphate is present on D62. Residues 82 to 100 constitute a DNA-binding region (H-T-H motif); that stretch reads DIPIIMLTALEDVLDKVTG. The segment at residues 142 to 246 is a DNA-binding region (ompR/PhoB-type); it reads INLFKTGSLN…ARGTGYLCRK (105 aa).

It localises to the plastid. Its subcellular location is the chloroplast. In terms of biological role, probable promoter-specific protein mediating the interaction between DNA and RNA polymerase. The sequence is that of Probable transcriptional regulator ycf27 (ycf27) from Cyanidium caldarium (Red alga).